A 350-amino-acid chain; its full sequence is Dihydroorotate dehydrogenase (quinone) (350 aa).

FMN contacts are provided by residues 65-69 (AGLDK) and threonine 89. Lysine 69 contributes to the substrate binding site. Substrate is bound at residue 114–118 (NRLGF). The FMN site is built by asparagine 149 and asparagine 182. Substrate is bound at residue asparagine 182. The Nucleophile role is filled by serine 185. Asparagine 187 lines the substrate pocket. Residues lysine 227 and threonine 255 each contribute to the FMN site. Position 256-257 (256-257 (NT)) interacts with substrate. FMN-binding positions include glycine 278, glycine 307, and 328-329 (YT).

It belongs to the dihydroorotate dehydrogenase family. Type 2 subfamily. Monomer. The cofactor is FMN.

It localises to the cell membrane. It catalyses the reaction (S)-dihydroorotate + a quinone = orotate + a quinol. It participates in pyrimidine metabolism; UMP biosynthesis via de novo pathway; orotate from (S)-dihydroorotate (quinone route): step 1/1. Its function is as follows. Catalyzes the conversion of dihydroorotate to orotate with quinone as electron acceptor. This is Dihydroorotate dehydrogenase (quinone) from Polaromonas naphthalenivorans (strain CJ2).